We begin with the raw amino-acid sequence, 118 residues long: Large ribosomal subunit protein uL18 (118 aa).

Belongs to the universal ribosomal protein uL18 family. Part of the 50S ribosomal subunit; part of the 5S rRNA/L5/L18/L25 subcomplex. Contacts the 5S and 23S rRNAs.

Functionally, this is one of the proteins that bind and probably mediate the attachment of the 5S RNA into the large ribosomal subunit, where it forms part of the central protuberance. The polypeptide is Large ribosomal subunit protein uL18 (Caulobacter sp. (strain K31)).